The chain runs to 490 residues: Glutamate--tRNA ligase (490 aa).

Positions 10-20 (PSPTGSLHIGG) match the 'HIGH' region motif. Positions 251–255 (KLSKR) match the 'KMSKS' region motif. Residue Lys-254 coordinates ATP.

Belongs to the class-I aminoacyl-tRNA synthetase family. Glutamate--tRNA ligase type 1 subfamily. As to quaternary structure, monomer.

Its subcellular location is the cytoplasm. The catalysed reaction is tRNA(Glu) + L-glutamate + ATP = L-glutamyl-tRNA(Glu) + AMP + diphosphate. Its function is as follows. Catalyzes the attachment of glutamate to tRNA(Glu) in a two-step reaction: glutamate is first activated by ATP to form Glu-AMP and then transferred to the acceptor end of tRNA(Glu). This is Glutamate--tRNA ligase from Moorella thermoacetica (strain ATCC 39073 / JCM 9320).